A 275-amino-acid chain; its full sequence is Myb/SANT-like DNA-binding domain-containing protein 3 (275 aa).

Residues 13–78 (FSELEKSILL…QLKKCWENIK (66 aa)) form the Myb-like domain. 2 positions are modified to phosphoserine: Ser-96 and Ser-98. Lys-154 is covalently cross-linked (Glycyl lysine isopeptide (Lys-Gly) (interchain with G-Cter in SUMO2)). Residues 211–247 (QLIQMNEVHVAKIQQIERECEMAEEEHRIKMEVLNKK) adopt a coiled-coil conformation. At Ser-274 the chain carries Phosphoserine.

The protein belongs to the MSANTD3 family. Expressed in brain.

This chain is Myb/SANT-like DNA-binding domain-containing protein 3 (MSANTD3), found in Homo sapiens (Human).